Reading from the N-terminus, the 339-residue chain is Thermospermine synthase ACAULIS5 (339 aa).

In terms of domain architecture, PABS spans Cys-33 to Asp-270. S-adenosyl 3-(methylsulfanyl)propylamine is bound by residues Gln-62, Glu-117, Asp-137, and Asp-168 to Ala-169. Asp-186 (proton acceptor) is an active-site residue.

Belongs to the spermidine/spermine synthase family. In terms of tissue distribution, highly expressed in stem internodes and roots. Lower levels in young seedlings before flowering and rosette leaves. Expressed in the vascular tissues. Restricted to procambial and/or provascular cells during primary root development and early leaves development.

It catalyses the reaction S-adenosyl 3-(methylsulfanyl)propylamine + spermidine = thermospermine + S-methyl-5'-thioadenosine + H(+). In terms of biological role, required for correct xylem specification through regulation of the lifetime of the xylem elements. Prevents premature death of the xylem vessel elements. The protein is Thermospermine synthase ACAULIS5 (ACL5) of Arabidopsis thaliana (Mouse-ear cress).